Reading from the N-terminus, the 191-residue chain is Pyridoxal 5'-phosphate synthase subunit PdxT (191 aa).

52-54 contributes to the L-glutamine binding site; that stretch reads GES. Catalysis depends on Cys-81, which acts as the Nucleophile. Residues Arg-108 and 136–137 contribute to the L-glutamine site; that span reads IR. Catalysis depends on charge relay system residues His-172 and Glu-174.

This sequence belongs to the glutaminase PdxT/SNO family. In terms of assembly, in the presence of PdxS, forms a dodecamer of heterodimers. Only shows activity in the heterodimer.

The catalysed reaction is aldehydo-D-ribose 5-phosphate + D-glyceraldehyde 3-phosphate + L-glutamine = pyridoxal 5'-phosphate + L-glutamate + phosphate + 3 H2O + H(+). The enzyme catalyses L-glutamine + H2O = L-glutamate + NH4(+). The protein operates within cofactor biosynthesis; pyridoxal 5'-phosphate biosynthesis. Its function is as follows. Catalyzes the hydrolysis of glutamine to glutamate and ammonia as part of the biosynthesis of pyridoxal 5'-phosphate. The resulting ammonia molecule is channeled to the active site of PdxS. The sequence is that of Pyridoxal 5'-phosphate synthase subunit PdxT from Actinobacillus pleuropneumoniae serotype 7 (strain AP76).